A 313-amino-acid chain; its full sequence is tRNA dimethylallyltransferase (313 aa).

Residue 11-18 (GPTASGKT) participates in ATP binding. 13–18 (TASGKT) contacts substrate. Interaction with substrate tRNA regions lie at residues 36–39 (DSRQ) and 160–164 (QRLIR).

The protein belongs to the IPP transferase family. In terms of assembly, monomer. Requires Mg(2+) as cofactor.

The catalysed reaction is adenosine(37) in tRNA + dimethylallyl diphosphate = N(6)-dimethylallyladenosine(37) in tRNA + diphosphate. Its function is as follows. Catalyzes the transfer of a dimethylallyl group onto the adenine at position 37 in tRNAs that read codons beginning with uridine, leading to the formation of N6-(dimethylallyl)adenosine (i(6)A). This is tRNA dimethylallyltransferase from Chlorobaculum parvum (strain DSM 263 / NCIMB 8327) (Chlorobium vibrioforme subsp. thiosulfatophilum).